Here is a 375-residue protein sequence, read N- to C-terminus: DNA replication and repair protein RecF (375 aa).

30–37 (GENAQGKT) contributes to the ATP binding site.

This sequence belongs to the RecF family.

It localises to the cytoplasm. Its function is as follows. The RecF protein is involved in DNA metabolism; it is required for DNA replication and normal SOS inducibility. RecF binds preferentially to single-stranded, linear DNA. It also seems to bind ATP. The protein is DNA replication and repair protein RecF of Bacillus anthracis (strain A0248).